Here is a 347-residue protein sequence, read N- to C-terminus: tRNA pseudouridine synthase D (347 aa).

D81 serves as the catalytic Nucleophile. Positions 158–304 (GVPNYFGNQR…MRHDRRAIAL (147 aa)) constitute a TRUD domain.

Belongs to the pseudouridine synthase TruD family.

It catalyses the reaction uridine(13) in tRNA = pseudouridine(13) in tRNA. Functionally, responsible for synthesis of pseudouridine from uracil-13 in transfer RNAs. The sequence is that of tRNA pseudouridine synthase D from Vibrio vulnificus (strain CMCP6).